A 298-amino-acid polypeptide reads, in one-letter code: ATP synthase gamma chain (298 aa).

Belongs to the ATPase gamma chain family. In terms of assembly, F-type ATPases have 2 components, CF(1) - the catalytic core - and CF(0) - the membrane proton channel. CF(1) has five subunits: alpha(3), beta(3), gamma(1), delta(1), epsilon(1). CF(0) has three main subunits: a, b and c.

It localises to the cell inner membrane. Produces ATP from ADP in the presence of a proton gradient across the membrane. The gamma chain is believed to be important in regulating ATPase activity and the flow of protons through the CF(0) complex. This is ATP synthase gamma chain from Albidiferax ferrireducens (strain ATCC BAA-621 / DSM 15236 / T118) (Rhodoferax ferrireducens).